The following is a 163-amino-acid chain: Nucleotide-binding protein YPDSF_2805 (163 aa).

It belongs to the YajQ family.

Functionally, nucleotide-binding protein. The protein is Nucleotide-binding protein YPDSF_2805 of Yersinia pestis (strain Pestoides F).